Reading from the N-terminus, the 395-residue chain is Phosphopentomutase (395 aa).

6 residues coordinate Mn(2+): Asp14, Asp286, His291, Asp327, His328, and His339.

This sequence belongs to the phosphopentomutase family. It depends on Mn(2+) as a cofactor.

Its subcellular location is the cytoplasm. It catalyses the reaction 2-deoxy-alpha-D-ribose 1-phosphate = 2-deoxy-D-ribose 5-phosphate. The catalysed reaction is alpha-D-ribose 1-phosphate = D-ribose 5-phosphate. It functions in the pathway carbohydrate degradation; 2-deoxy-D-ribose 1-phosphate degradation; D-glyceraldehyde 3-phosphate and acetaldehyde from 2-deoxy-alpha-D-ribose 1-phosphate: step 1/2. Its function is as follows. Isomerase that catalyzes the conversion of deoxy-ribose 1-phosphate (dRib-1-P) and ribose 1-phosphate (Rib-1-P) to deoxy-ribose 5-phosphate (dRib-5-P) and ribose 5-phosphate (Rib-5-P), respectively. In Staphylococcus saprophyticus subsp. saprophyticus (strain ATCC 15305 / DSM 20229 / NCIMB 8711 / NCTC 7292 / S-41), this protein is Phosphopentomutase.